A 204-amino-acid polypeptide reads, in one-letter code: Probable GTP-binding protein EngB (204 aa).

One can recognise an EngB-type G domain in the interval 23–195 (TLPEIAFVGR…ASALMQLLAM (173 aa)). Residues 31–38 (GRSNVGKS), 58–62 (GRTRE), 76–79 (DLPG), 143–146 (TKID), and 174–176 (FSA) contribute to the GTP site. 2 residues coordinate Mg(2+): Ser38 and Thr60.

It belongs to the TRAFAC class TrmE-Era-EngA-EngB-Septin-like GTPase superfamily. EngB GTPase family. Requires Mg(2+) as cofactor.

Its function is as follows. Necessary for normal cell division and for the maintenance of normal septation. In Gemmatimonas aurantiaca (strain DSM 14586 / JCM 11422 / NBRC 100505 / T-27), this protein is Probable GTP-binding protein EngB.